We begin with the raw amino-acid sequence, 81 residues long: MASIEERVVDIVSEQLGVDKDKITRETSFVNDLGADSLDTVELVMELEEEFDISIPDDSAEKIQKVGEAIDFIEKEKGEDA.

Residues 2–77 (ASIEERVVDI…EAIDFIEKEK (76 aa)) form the Carrier domain. The residue at position 37 (Ser37) is an O-(pantetheine 4'-phosphoryl)serine.

This sequence belongs to the acyl carrier protein (ACP) family. Post-translationally, 4'-phosphopantetheine is transferred from CoA to a specific serine of apo-ACP by AcpS. This modification is essential for activity because fatty acids are bound in thioester linkage to the sulfhydryl of the prosthetic group.

The protein localises to the cytoplasm. It functions in the pathway lipid metabolism; fatty acid biosynthesis. Its function is as follows. Carrier of the growing fatty acid chain in fatty acid biosynthesis. This is Acyl carrier protein from Rhodopirellula baltica (strain DSM 10527 / NCIMB 13988 / SH1).